The primary structure comprises 61 residues: Small ribosomal subunit protein uS14 (61 aa).

4 residues coordinate Zn(2+): Cys24, Cys27, Cys40, and Cys43.

This sequence belongs to the universal ribosomal protein uS14 family. Zinc-binding uS14 subfamily. Part of the 30S ribosomal subunit. Contacts proteins S3 and S10. Requires Zn(2+) as cofactor.

In terms of biological role, binds 16S rRNA, required for the assembly of 30S particles and may also be responsible for determining the conformation of the 16S rRNA at the A site. This is Small ribosomal subunit protein uS14 from Lachnospira eligens (strain ATCC 27750 / DSM 3376 / VPI C15-48 / C15-B4) (Eubacterium eligens).